The sequence spans 358 residues: Putative inhibitor of apoptosis (358 aa).

BIR repeat units follow at residues 4 to 70 and 90 to 157; these read EKDR…CPFL and YAAR…CEYL. Residues Cys127, Cys130, His147, and Cys154 each contribute to the Zn(2+) site. The CARD domain maps to 193 to 283; that stretch reads EPPNDLSLIR…MLYKHLFVQQ (91 aa). The RING-type zinc finger occupies 311–346; it reads CKVCMDKEVSIVFIPCGHLVVCKDCAPSLRKCPICR.

Belongs to the IAP family.

The polypeptide is Putative inhibitor of apoptosis (PIAP) (Sus scrofa (Pig)).